The primary structure comprises 193 residues: Lipopolysaccharide core heptose(II)-phosphate phosphatase (193 aa).

The first 25 residues, 1–25, serve as a signal peptide directing secretion; the sequence is MKLKKHVAVLLISFLCLIGLVTQHA.

This sequence belongs to the phosphoglycerate mutase family. Ais subfamily.

It localises to the periplasm. The protein operates within bacterial outer membrane biogenesis; lipopolysaccharide metabolism. In terms of biological role, catalyzes the dephosphorylation of heptose(II) of the outer membrane lipopolysaccharide core. This Escherichia fergusonii (strain ATCC 35469 / DSM 13698 / CCUG 18766 / IAM 14443 / JCM 21226 / LMG 7866 / NBRC 102419 / NCTC 12128 / CDC 0568-73) protein is Lipopolysaccharide core heptose(II)-phosphate phosphatase.